A 752-amino-acid chain; its full sequence is MAISSTDRRSKNVQIFVEKDAVETSFAKWAQPGHFSRTLAKGPKTTTWIWNLHADAHDFDSQTSSLEEVSRKIFSAHFGQLSVIFLWISGMHFHGAYFSNYSAWLTDPVNIKQSSQVVWPIVGQEILNGDVGGNFQGIQTTSGWFQMWRAEGITSEVELYWIAIGGLAMSAIMLFAGWFHYHKAAPKLEWFQNAESMMNHHLAGLLGLGCLSWSGHQIHVALPINKLLDAGVAPQEIPLPHEFLINRELMSQLYPSFSKGLAPFFSGHWGEYSDFLTFKGGLNPVTGGLWLSDIAHHHLALAVLFIFAGHMYRTNWGIGHSMKEILEAHKGPFTGEGHKGLYEILTTSWHAQLAINLAMMGSLSIIVAHHMYAMPPYPYIATDYATQLSLFTHHMWIGGFCVTGGAAHAAIFMVRDYTPANNYNNLLDRVLRHRDSIIAHLNWVCIFLGCHAFGFYIHNDTMRALGRPQDMFSDKAIQLQPIFAQWIQNIHLLAPGTTAPNALATTSYAFGGEVVEVGGKIAMMPIQLGTADFMVHHIHAFTIHVTVLILLKGVLYARSSKLIPDKANLGFRFPCDGPGRGGTCQSSSWDHVFLGLFWMYNSISVVIFHFSWKMQSDVWGTISPDGSISHITGGNFAKGAITINGWLRDFLWSQASQVIQSYGSAASAYGLIFLGAHFIWAFSLMFLFSGRGYWQELIESIVWAHNKLNFAPAIQPRALSITQGRAVGLAHYLLGGIGTTWAFFLARAVSIS.

The next 8 membrane-spanning stretches (helical) occupy residues 73–96 (IFSA…FHGA), 159–182 (LYWI…FHYH), 198–222 (MNHH…HVAL), 294–312 (IAHH…GHMY), 349–372 (WHAQ…HHMY), 388–414 (LSLF…IFMV), 436–458 (SIIA…FYIH), and 533–551 (FMVH…LILL). [4Fe-4S] cluster contacts are provided by Cys-575 and Cys-584. 2 helical membrane-spanning segments follow: residues 591–612 (HVFL…HFSW) and 666–688 (ASAY…MFLF). His-677 lines the chlorophyll a' pocket. Chlorophyll a contacts are provided by Met-685 and Tyr-693. A phylloquinone-binding site is contributed by Trp-694. A helical membrane pass occupies residues 726 to 746 (AVGLAHYLLGGIGTTWAFFLA).

It belongs to the PsaA/PsaB family. As to quaternary structure, the PsaA/B heterodimer binds the P700 chlorophyll special pair and subsequent electron acceptors. PSI consists of a core antenna complex that captures photons, and an electron transfer chain that converts photonic excitation into a charge separation. The eukaryotic PSI reaction center is composed of at least 11 subunits. P700 is a chlorophyll a/chlorophyll a' dimer, A0 is one or more chlorophyll a, A1 is one or both phylloquinones and FX is a shared 4Fe-4S iron-sulfur center. is required as a cofactor.

Its subcellular location is the plastid. The protein resides in the chloroplast thylakoid membrane. It carries out the reaction reduced [plastocyanin] + hnu + oxidized [2Fe-2S]-[ferredoxin] = oxidized [plastocyanin] + reduced [2Fe-2S]-[ferredoxin]. Its function is as follows. PsaA and PsaB bind P700, the primary electron donor of photosystem I (PSI), as well as the electron acceptors A0, A1 and FX. PSI is a plastocyanin/cytochrome c6-ferredoxin oxidoreductase, converting photonic excitation into a charge separation, which transfers an electron from the donor P700 chlorophyll pair to the spectroscopically characterized acceptors A0, A1, FX, FA and FB in turn. Oxidized P700 is reduced on the lumenal side of the thylakoid membrane by plastocyanin or cytochrome c6. The protein is Photosystem I P700 chlorophyll a apoprotein A1 of Phaeodactylum tricornutum (strain CCAP 1055/1).